The following is a 356-amino-acid chain: Protein-arginine kinase (356 aa).

The Phosphagen kinase C-terminal domain maps to 24–254 (IVLSSRIRLA…MQLIQQERAA (231 aa)). ATP-binding positions include 27–31 (SSRIR), His91, Arg125, 176–180 (RASVM), and 207–212 (RGIYGE). The RDXXRA motif of the pArg binding pocket involved in allosteric regulation signature appears at 337 to 342 (RDERRA).

Belongs to the ATP:guanido phosphotransferase family.

The enzyme catalyses L-arginyl-[protein] + ATP = N(omega)-phospho-L-arginyl-[protein] + ADP + H(+). With respect to regulation, appears to be allosterically activated by the binding of pArg-containing polypeptides to the pArg-binding pocket localized in the C-terminal domain of McsB. In terms of biological role, catalyzes the specific phosphorylation of arginine residues in a large number of proteins. Is part of the bacterial stress response system. Protein arginine phosphorylation has a physiologically important role and is involved in the regulation of many critical cellular processes, such as protein homeostasis, motility, competence, and stringent and stress responses, by regulating gene expression and protein activity. This Halalkalibacterium halodurans (strain ATCC BAA-125 / DSM 18197 / FERM 7344 / JCM 9153 / C-125) (Bacillus halodurans) protein is Protein-arginine kinase.